The chain runs to 703 residues: Probable boron transporter 2 (703 aa).

At 1–35 the chain is on the cytoplasmic side; the sequence is MEETFVPFEGIKNDLKGRLMCYKQDWTGGIKAGFR. Residues 36–56 form a helical membrane-spanning segment; it reads ILAPTTYIFFASAIPVISFGE. The Extracellular segment spans residues 57 to 75; the sequence is QLERSTDGVLTAVQTLAST. The helical transmembrane segment at 76 to 96 threads the bilayer; that stretch reads AICGIIHSIIGGQPLLILGVA. Residues 97–120 lie on the Cytoplasmic side of the membrane; it reads EPTVIMYTFMFNFAKGRPELGRNL. Residues 121–141 form a helical membrane-spanning segment; that stretch reads FLAWSGWVCVWTSLILFVLAI. The Extracellular portion of the chain corresponds to 142–155; it reads CGACSFINRFTRVA. A helical membrane pass occupies residues 156–176; that stretch reads GELFGLLIAMLFMQQAIKGLV. The Cytoplasmic segment spans residues 177–195; that stretch reads DEFRAPAREDLKLVEFLPS. A helical membrane pass occupies residues 196 to 216; the sequence is WRFANGMFALVLSFGLLITAL. Residues 217-233 lie on the Extracellular side of the membrane; sequence RSRKARSWRYGTGWLRS. The helical transmembrane segment at 234–254 threads the bilayer; that stretch reads LVADYGVPLMVLVWTGVSYIP. Residues 255–289 are Cytoplasmic-facing; the sequence is TGDVPKGIPRRLFSPNPWSPGAYENWTVVKEMLQV. The helical transmembrane segment at 290-310 threads the bilayer; the sequence is PIVYIIGAFIPATMIAVLYYF. At 311 to 337 the chain is on the extracellular side; it reads DHSVASQLAQQKEFNLRKPSSYHYDLL. Residues 338-358 traverse the membrane as a helical segment; sequence LLGFLTLMCGLLGIPPSNGVI. Topologically, residues 359 to 480 are cytoplasmic; sequence PQSPMHTKSL…AVMVGGCVAA (122 aa). Residues 481-501 traverse the membrane as a helical segment; the sequence is MPLLKMIPTSVLWGYFAFMAI. Residues 502-557 are Extracellular-facing; sequence ESLPGNQFWERILLLFTAPSRRFKVLEDNHATFVETVPFKTIAMFTIFQTTYLLTC. Residues 558 to 578 traverse the membrane as a helical segment; the sequence is FGLTWIPIAGVMFPLLIMFLI. The Cytoplasmic portion of the chain corresponds to 579-703; sequence PVRQYILPRF…SPLNPSSSSK (125 aa). The disordered stretch occupies residues 678–703; sequence EMSPRLSGKGQNSPKPSPLNPSSSSK.

The protein belongs to the anion exchanger (TC 2.A.31.3) family.

The protein resides in the membrane. In terms of biological role, probable boron transporter. Boron is essential for maintaining the integrity of plants cell walls. The chain is Probable boron transporter 2 (BOR2) from Arabidopsis thaliana (Mouse-ear cress).